Reading from the N-terminus, the 90-residue chain is Small ribosomal subunit protein uS15c (90 aa).

The protein belongs to the universal ribosomal protein uS15 family. As to quaternary structure, part of the 30S ribosomal subunit.

The protein localises to the plastid. It is found in the chloroplast. This Piper cenocladum (Ant piper) protein is Small ribosomal subunit protein uS15c (rps15).